The primary structure comprises 485 residues: Glutamyl-tRNA(Gln) amidotransferase subunit A (485 aa).

Catalysis depends on charge relay system residues Lys82 and Ser157. Ser181 acts as the Acyl-ester intermediate in catalysis.

This sequence belongs to the amidase family. GatA subfamily. Heterotrimer of A, B and C subunits.

The enzyme catalyses L-glutamyl-tRNA(Gln) + L-glutamine + ATP + H2O = L-glutaminyl-tRNA(Gln) + L-glutamate + ADP + phosphate + H(+). Its function is as follows. Allows the formation of correctly charged Gln-tRNA(Gln) through the transamidation of misacylated Glu-tRNA(Gln) in organisms which lack glutaminyl-tRNA synthetase. The reaction takes place in the presence of glutamine and ATP through an activated gamma-phospho-Glu-tRNA(Gln). The protein is Glutamyl-tRNA(Gln) amidotransferase subunit A of Treponema denticola (strain ATCC 35405 / DSM 14222 / CIP 103919 / JCM 8153 / KCTC 15104).